The sequence spans 490 residues: Aspartyl/glutamyl-tRNA(Asn/Gln) amidotransferase subunit B (490 aa).

It belongs to the GatB/GatE family. GatB subfamily. In terms of assembly, heterotrimer of A, B and C subunits.

It carries out the reaction L-glutamyl-tRNA(Gln) + L-glutamine + ATP + H2O = L-glutaminyl-tRNA(Gln) + L-glutamate + ADP + phosphate + H(+). It catalyses the reaction L-aspartyl-tRNA(Asn) + L-glutamine + ATP + H2O = L-asparaginyl-tRNA(Asn) + L-glutamate + ADP + phosphate + 2 H(+). Its function is as follows. Allows the formation of correctly charged Asn-tRNA(Asn) or Gln-tRNA(Gln) through the transamidation of misacylated Asp-tRNA(Asn) or Glu-tRNA(Gln) in organisms which lack either or both of asparaginyl-tRNA or glutaminyl-tRNA synthetases. The reaction takes place in the presence of glutamine and ATP through an activated phospho-Asp-tRNA(Asn) or phospho-Glu-tRNA(Gln). This is Aspartyl/glutamyl-tRNA(Asn/Gln) amidotransferase subunit B from Burkholderia mallei (strain NCTC 10247).